Consider the following 239-residue polypeptide: Orotidine 5'-phosphate decarboxylase (239 aa).

Residues aspartate 10, lysine 32, 59–68 (DLKLHDIPNT), threonine 122, arginine 184, glutamine 193, glycine 213, and arginine 214 contribute to the substrate site. Lysine 61 serves as the catalytic Proton donor.

It belongs to the OMP decarboxylase family. Type 1 subfamily. As to quaternary structure, homodimer.

The enzyme catalyses orotidine 5'-phosphate + H(+) = UMP + CO2. Its pathway is pyrimidine metabolism; UMP biosynthesis via de novo pathway; UMP from orotate: step 2/2. Catalyzes the decarboxylation of orotidine 5'-monophosphate (OMP) to uridine 5'-monophosphate (UMP). The protein is Orotidine 5'-phosphate decarboxylase of Geobacillus thermodenitrificans (strain NG80-2).